Consider the following 211-residue polypeptide: 3-demethoxyubiquinol 3-hydroxylase (211 aa).

Fe cation contacts are provided by glutamate 60, glutamate 90, histidine 93, glutamate 142, glutamate 174, and histidine 177.

Belongs to the COQ7 family. Fe cation serves as cofactor.

It localises to the cell membrane. The catalysed reaction is a 5-methoxy-2-methyl-3-(all-trans-polyprenyl)benzene-1,4-diol + AH2 + O2 = a 3-demethylubiquinol + A + H2O. It participates in cofactor biosynthesis; ubiquinone biosynthesis. Catalyzes the hydroxylation of 2-nonaprenyl-3-methyl-6-methoxy-1,4-benzoquinol during ubiquinone biosynthesis. The protein is 3-demethoxyubiquinol 3-hydroxylase of Francisella tularensis subsp. tularensis (strain FSC 198).